Here is a 512-residue protein sequence, read N- to C-terminus: Ribose import ATP-binding protein RbsA 2 (512 aa).

ABC transporter domains lie at 22–258 (LEMR…VGRD) and 263–512 (FPKV…TGNA). Residue 54–61 (GENGAGKS) coordinates ATP.

Belongs to the ABC transporter superfamily. Ribose importer (TC 3.A.1.2.1) family. The complex is composed of an ATP-binding protein (RbsA), two transmembrane proteins (RbsC) and a solute-binding protein (RbsB).

The protein localises to the cell inner membrane. It carries out the reaction D-ribose(out) + ATP + H2O = D-ribose(in) + ADP + phosphate + H(+). In terms of biological role, part of the ABC transporter complex RbsABC involved in ribose import. Responsible for energy coupling to the transport system. The protein is Ribose import ATP-binding protein RbsA 2 of Rhizobium johnstonii (strain DSM 114642 / LMG 32736 / 3841) (Rhizobium leguminosarum bv. viciae).